The chain runs to 694 residues: Cyclic nucleotide-gated ion channel 4 (694 aa).

A compositionally biased stretch (basic and acidic residues) spans 1–15; it reads MATEQEFTRASRFSR. A disordered region spans residues 1-64; it reads MATEQEFTRA…RIGLTCGGRR (64 aa). Over 1–92 the chain is Cytoplasmic; the sequence is MATEQEFTRA…RSKWVREWNK (92 aa). The span at 24 to 53 shows a compositional bias: acidic residues; that stretch reads SEEDNTEEEDEEEEEMEEIEEEEEEEEEED. Residues 93 to 113 form a helical membrane-spanning segment; sequence VFLLVCATGLFVDPLFLYTLS. At 114–126 the chain is on the extracellular side; sequence VSDTCMCLLVDGW. Residues 127–147 traverse the membrane as a helical segment; sequence LALTVTALRSMTDLLHLWNIW. At 148-187 the chain is on the cytoplasmic side; it reads IQFKIARRWPYPGGDSDGDTNKGGGTRGSTRVAPPYVKKN. The helical transmembrane segment at 188 to 208 threads the bilayer; that stretch reads GFFFDLFVILPLPQVVLWVVI. Residues 209 to 216 are Extracellular-facing; it reads PSLLKRGS. A helical membrane pass occupies residues 217–237; the sequence is VTLVVSVLLVTFLFQYLPKIY. Residues 238 to 251 lie on the Cytoplasmic side of the membrane; sequence HSIRHLRRNATLSG. A helical transmembrane segment spans residues 252-272; sequence YIFGTVWWGIALNMIAYFVAA. Residues 273-392 lie on the Extracellular side of the membrane; it reads HAAGACWYLL…LESTTEWSEV (120 aa). The helical transmembrane segment at 393–413 threads the bilayer; it reads VFNIIVLTSGLLLVTMLIGNI. Residues 414-694 lie on the Cytoplasmic side of the membrane; that stretch reads KVFLHATTSK…KPNPDDFDDY (281 aa). A nucleoside 3',5'-cyclic phosphate contacts are provided by residues 496–626 and aspartate 565; that span reads LFQH…ARYY. Residues 610–626 are calmodulin-binding; the sequence is FRYTFVNEKVKRSARYY. The 30-residue stretch at 631–660 folds into the IQ domain; it reads RTWAAVAVQLAWRRYKHRLTLTSLSFIRPR.

This sequence belongs to the cyclic nucleotide-gated cation channel (TC 1.A.1.5) family. In terms of assembly, homotetramer or heterotetramer.

The protein localises to the cell membrane. Its function is as follows. Acts as a cyclic nucleotide-gated ion channel. Permeable to potassium and sodium in a cyclic nucleotide-dependent fashion (cAMP or cGMP). Might constitute a common downstream component of the signaling pathways leading to hypersensitive response (HR). This Arabidopsis thaliana (Mouse-ear cress) protein is Cyclic nucleotide-gated ion channel 4 (CNGC4).